A 146-amino-acid polypeptide reads, in one-letter code: Leghemoglobin Lb120-29 (146 aa).

Residues 2 to 146 (GFTDKQEALV…LASAIKKAMS (145 aa)) enclose the Globin domain. A nitrated tyrosine mark is found at Tyr-24 and Tyr-29. Ser-44 provides a ligand contact to heme b. A Phosphoserine modification is found at Ser-44. Residue His-61 participates in O2 binding. Positions 64, 93, and 96 each coordinate heme b. Tyr-134 is subject to Nitrated tyrosine.

It belongs to the plant globin family. Monomer. Post-translationally, nitrated in effective nodules and particularly in hypoxic conditions; this mechanism may play a protective role in the symbiosis by buffering toxic peroxynitrite NO(2)(-). Nitration level decrease during nodule senescence. In terms of processing, phosphorylation at Ser-44 disrupts the molecular environment of its porphyrin ring oxygen binding pocket, thus leading to a reduced oxygen consumption and to the delivery of oxygen O(2) to symbiosomes. In terms of tissue distribution, root nodules.

Its subcellular location is the cytoplasm. The protein resides in the cytosol. It is found in the nucleus. Functionally, leghemoglobin that reversibly binds oxygen O(2) through a pentacoordinated heme iron. In root nodules, facilitates the diffusion of oxygen to the bacteroids while preventing the bacterial nitrogenase from being inactivated by buffering dioxygen, nitric oxide and carbon monoxide, and promoting the formation of reactive oxygen species (ROS, e.g. H(2)O(2)). This role is essential for symbiotic nitrogen fixation (SNF). The polypeptide is Leghemoglobin Lb120-29 (Pisum sativum (Garden pea)).